The following is a 525-amino-acid chain: Light-independent protochlorophyllide reductase subunit B (525 aa).

Aspartate 36 provides a ligand contact to [4Fe-4S] cluster. Aspartate 292 (proton donor) is an active-site residue. Position 428–429 (glycine 428–leucine 429) interacts with substrate. The segment at proline 447–glutamate 470 is disordered. Positions alanine 460–glutamate 470 are enriched in low complexity.

It belongs to the ChlB/BchB/BchZ family. Protochlorophyllide reductase is composed of three subunits; BchL, BchN and BchB. Forms a heterotetramer of two BchB and two BchN subunits. Requires [4Fe-4S] cluster as cofactor.

It catalyses the reaction chlorophyllide a + oxidized 2[4Fe-4S]-[ferredoxin] + 2 ADP + 2 phosphate = protochlorophyllide a + reduced 2[4Fe-4S]-[ferredoxin] + 2 ATP + 2 H2O. It participates in porphyrin-containing compound metabolism; bacteriochlorophyll biosynthesis (light-independent). In terms of biological role, component of the dark-operative protochlorophyllide reductase (DPOR) that uses Mg-ATP and reduced ferredoxin to reduce ring D of protochlorophyllide (Pchlide) to form chlorophyllide a (Chlide). This reaction is light-independent. The NB-protein (BchN-BchB) is the catalytic component of the complex. The protein is Light-independent protochlorophyllide reductase subunit B of Chlorobium luteolum (strain DSM 273 / BCRC 81028 / 2530) (Pelodictyon luteolum).